We begin with the raw amino-acid sequence, 192 residues long: NOP protein chaperone 1 (192 aa).

The segment covering 1-26 (MEVSGESHSGPSCSSSSRDGSGVSVS) has biased composition (low complexity). Residues 1 to 39 (MEVSGESHSGPSCSSSSRDGSGVSVSKELLMAGSGGRGG) are disordered. Residues Ser34 and Ser66 each carry the phosphoserine modification. Residues 118–192 (FEMNQSHSKE…SENKEKQENK (75 aa)) are disordered. Positions 129 to 152 (DSSEENSQDSSEESSESEDEDDST) are enriched in acidic residues. Positions 164–177 (KLPHSEDGKGKIEV) are enriched in basic and acidic residues. Position 180 is a phosphoserine (Ser180).

Interacts with NOP58, RUVBL1 and RUVBL2; the interactions are direct and NOPCHAP1 bridges the association of NOP58 with RUVBL1:RUVBL2 even in absence of snoRNAs. The interactions with RUVBL1 and RUVBL2 are disrupted upon ATP binding.

Its subcellular location is the nucleus. Client-loading PAQosome/R2TP complex cofactor that selects NOP58 to promote box C/D small nucleolar ribonucleoprotein (snoRNP) assembly. Acts as a bridge between NOP58 and the R2TP complex via RUVBL1:RUVBL2. The sequence is that of NOP protein chaperone 1 (NOPCHAP1) from Bos taurus (Bovine).